The following is a 152-amino-acid chain: UPF0266 membrane protein YobD (152 aa).

Transmembrane regions (helical) follow at residues 6 to 26 (LLLI…QFIM), 45 to 65 (VDSV…VTSH), and 67 to 87 (AQMT…IFWI).

This sequence belongs to the UPF0266 family.

It is found in the cell inner membrane. In Salmonella paratyphi C (strain RKS4594), this protein is UPF0266 membrane protein YobD.